The primary structure comprises 340 residues: Zinc finger protein 367 (340 aa).

The interval 101 to 140 (GAPQSSASVAAVSGGEDEEEASSPDSGHLKDGIRRGRPRA) is disordered. Over residues 127 to 140 (GHLKDGIRRGRPRA) the composition is skewed to basic and acidic residues. C2H2-type zinc fingers lie at residues 157–179 (IRCN…KRTH) and 185–209 (YLCD…QRLH). A disordered region spans residues 280 to 317 (KGKLVQKADQEQQDPLEYLQSDEEDDEKSGAQRRLQEQ). The stretch at 299-332 (QSDEEDDEKSGAQRRLQEQRERLHGALALIELAN) forms a coiled coil. A Phosphoserine modification is found at serine 300. Positions 307–317 (KSGAQRRLQEQ) are enriched in basic and acidic residues.

Belongs to the krueppel C2H2-type zinc-finger protein family. As to expression, expressed in bone marrow and ovary.

Its subcellular location is the nucleus. Functionally, transcriptional activator. Isoform 1 may be involved in transcriptional activation of erythroid genes. The sequence is that of Zinc finger protein 367 (Znf367) from Mus musculus (Mouse).